An 86-amino-acid chain; its full sequence is Probable oxaloacetate decarboxylase gamma chain 1 (86 aa).

A helical transmembrane segment spans residues 11–33; sequence AATLMVTGMAVVFLFLTLLVYLV.

It belongs to the OadG family. In terms of assembly, heterotrimer of an alpha, a beta and a gamma subunit. The cofactor is Na(+).

The protein resides in the cell membrane. It carries out the reaction oxaloacetate + 2 Na(+)(in) + H(+) = pyruvate + 2 Na(+)(out) + CO2. Its function is as follows. Catalyzes the decarboxylation of oxaloacetate coupled to Na(+) translocation. The protein is Probable oxaloacetate decarboxylase gamma chain 1 (oadG1) of Vibrio cholerae serotype O1 (strain ATCC 39315 / El Tor Inaba N16961).